Reading from the N-terminus, the 179-residue chain is MKREDIKYIIESVMFAYGEPISIKELNYIINKELSSKEIEIMLNLLIEEYREQNRGIQIIKLENKYQMCTNKDYAEYIKKIIEPKKKKSLSQATLETLTIIAYKQPITKVEIEDIRGVKCDKVLQTLFENELIREAGRLNKIGKPIIYKTTDEFLKLLNIESLEELPPIENYQEVATNE.

Belongs to the ScpB family. In terms of assembly, homodimer. Homodimerization may be required to stabilize the binding of ScpA to the Smc head domains. Component of a cohesin-like complex composed of ScpA, ScpB and the Smc homodimer, in which ScpA and ScpB bind to the head domain of Smc. The presence of the three proteins is required for the association of the complex with DNA.

The protein resides in the cytoplasm. Its function is as follows. Participates in chromosomal partition during cell division. May act via the formation of a condensin-like complex containing Smc and ScpA that pull DNA away from mid-cell into both cell halves. The polypeptide is Segregation and condensation protein B (Clostridioides difficile (strain 630) (Peptoclostridium difficile)).